The following is a 247-amino-acid chain: Adenosylcobinamide-GDP ribazoletransferase (247 aa).

Transmembrane regions (helical) follow at residues 34–54 (IVMF…IFIL), 59–79 (CGIP…TGGF), 113–133 (GGLA…ELAL), 138–158 (MLAA…LLMY), 171–191 (VFIG…AVIV), and 194–214 (VLLP…AIFI).

Belongs to the CobS family. Mg(2+) serves as cofactor.

Its subcellular location is the cell inner membrane. The enzyme catalyses alpha-ribazole + adenosylcob(III)inamide-GDP = adenosylcob(III)alamin + GMP + H(+). The catalysed reaction is alpha-ribazole 5'-phosphate + adenosylcob(III)inamide-GDP = adenosylcob(III)alamin 5'-phosphate + GMP + H(+). It participates in cofactor biosynthesis; adenosylcobalamin biosynthesis; adenosylcobalamin from cob(II)yrinate a,c-diamide: step 7/7. Joins adenosylcobinamide-GDP and alpha-ribazole to generate adenosylcobalamin (Ado-cobalamin). Also synthesizes adenosylcobalamin 5'-phosphate from adenosylcobinamide-GDP and alpha-ribazole 5'-phosphate. This Salmonella schwarzengrund (strain CVM19633) protein is Adenosylcobinamide-GDP ribazoletransferase.